The sequence spans 638 residues: Autolysin (638 aa).

An N-terminal signal peptide occupies residues 1–28; the sequence is MSLATRRFGAAAALLVAACVLCTAPAWA. Residues 29 to 183 constitute a propeptide, activation peptide; sequence QNETTGTGMV…LKSILKGSQK (155 aa). A glycan (N-linked (GlcNAc...) asparagine) is linked at asparagine 30. Residues 95–102 carry the Cysteine switch motif; sequence PRCNVPRA. Zn(2+) is bound at residue cysteine 97. Asparagine 126 is a glycosylation site (N-linked (GlcNAc...) asparagine). A disordered region spans residues 269–292; that stretch reads VTPPPRPPRPPRPPPRAGSTISSL. Over residues 270-284 the composition is skewed to pro residues; the sequence is TPPPRPPRPPRPPPR. An N-linked (GlcNAc...) asparagine glycan is attached at asparagine 296. Histidine 396 is a Zn(2+) binding site. Residue glutamate 397 is part of the active site. The Zn(2+) site is built by histidine 400 and histidine 406. Residues asparagine 458, asparagine 465, asparagine 470, and asparagine 523 are each glycosylated (N-linked (GlcNAc...) asparagine).

The protein belongs to the peptidase M11 family. The cofactor is Zn(2+). Post-translationally, present in 2 forms: an inactive V-form in vegetative cells and an active and soluble G-form. The V-form enzyme may be converted to the G-form enzyme during gametic differentiation under nitrogen-starved conditions.

Its subcellular location is the periplasm. It localises to the secreted. It is found in the cell wall. The catalysed reaction is Cleavage of the proline- and hydroxyproline-rich proteins of the Chlamydomonas cell wall. Also cleaves azocasein, gelatin and Leu-Trp-Met-|-Arg-Phe-Ala.. Functionally, mediates digestion of the cell walls of the 2 mating type gametes during mating as a necessary prelude to cell fusion. This enzyme acts specifically on the framework proteins (inner wall) of the cell wall, cleaving several model peptides at specific sites. This Chlamydomonas reinhardtii (Chlamydomonas smithii) protein is Autolysin.